A 346-amino-acid chain; its full sequence is Uroporphyrinogen decarboxylase (346 aa).

Substrate is bound by residues 26 to 30, D76, Y153, S208, and H323; that span reads RQAGR.

The protein belongs to the uroporphyrinogen decarboxylase family. Homodimer.

The protein localises to the cytoplasm. It carries out the reaction uroporphyrinogen III + 4 H(+) = coproporphyrinogen III + 4 CO2. The protein operates within porphyrin-containing compound metabolism; protoporphyrin-IX biosynthesis; coproporphyrinogen-III from 5-aminolevulinate: step 4/4. Functionally, catalyzes the decarboxylation of four acetate groups of uroporphyrinogen-III to yield coproporphyrinogen-III. The chain is Uroporphyrinogen decarboxylase from Prochlorococcus marinus (strain AS9601).